Consider the following 451-residue polypeptide: Tubulin beta-1 chain (451 aa).

Positions 1-4 match the MREI motif motif; sequence MREI. 6 residues coordinate GTP: glutamine 11, glutamate 69, serine 138, glycine 142, threonine 143, and glycine 144. Position 69 (glutamate 69) interacts with Mg(2+). At serine 172 the chain carries Phosphoserine; by CDK1. 2 residues coordinate GTP: asparagine 204 and asparagine 226. The segment at 432-451 is disordered; that stretch reads LEEDEEVTEEAEMEPEDKGH. A compositionally biased stretch (acidic residues) spans 433-451; it reads EEDEEVTEEAEMEPEDKGH. At glutamate 440 the chain carries 5-glutamyl polyglutamate.

This sequence belongs to the tubulin family. In terms of assembly, dimer of alpha and beta chains. A typical microtubule is a hollow water-filled tube with an outer diameter of 25 nm and an inner diameter of 15 nM. Alpha-beta heterodimers associate head-to-tail to form protofilaments running lengthwise along the microtubule wall with the beta-tubulin subunit facing the microtubule plus end conferring a structural polarity. Microtubules usually have 13 protofilaments but different protofilament numbers can be found in some organisms and specialized cells. Interacts with RANBP10. It depends on Mg(2+) as a cofactor. In terms of processing, some glutamate residues at the C-terminus are polyglutamylated, resulting in polyglutamate chains on the gamma-carboxyl group. Polyglutamylation plays a key role in microtubule severing by spastin (SPAST). SPAST preferentially recognizes and acts on microtubules decorated with short polyglutamate tails: severing activity by SPAST increases as the number of glutamates per tubulin rises from one to eight, but decreases beyond this glutamylation threshold. Glutamylation is also involved in cilia motility. Post-translationally, some glutamate residues at the C-terminus are monoglycylated but not polyglycylated due to the absence of functional TTLL10 in human. Monoglycylation is mainly limited to tubulin incorporated into cilia and flagella axonemes, which is required for their stability and maintenance. Flagella glycylation controls sperm motility. Both polyglutamylation and monoglycylation can coexist on the same protein on adjacent residues, and lowering glycylation levels increases polyglutamylation, and reciprocally. Phosphorylated on Ser-172 by CDK1 during the cell cycle, from metaphase to telophase, but not in interphase. This phosphorylation inhibits tubulin incorporation into microtubules. Hematopoietic cell-specific. Major isotype in leukocytes, where it represents 50% of all beta-tubulins.

The protein localises to the cytoplasm. It is found in the cytoskeleton. In terms of biological role, tubulin is the major constituent of microtubules, a cylinder consisting of laterally associated linear protofilaments composed of alpha- and beta-tubulin heterodimers. Microtubules grow by the addition of GTP-tubulin dimers to the microtubule end, where a stabilizing cap forms. Below the cap, tubulin dimers are in GDP-bound state, owing to GTPase activity of alpha-tubulin. The chain is Tubulin beta-1 chain (TUBB1) from Homo sapiens (Human).